Consider the following 78-residue polypeptide: Large ribosomal subunit protein bL28 (78 aa).

Residues 1 to 20 (MSRVCQVTGKRPAVGNNRSH) form a disordered region.

Belongs to the bacterial ribosomal protein bL28 family.

The chain is Large ribosomal subunit protein bL28 from Actinobacillus succinogenes (strain ATCC 55618 / DSM 22257 / CCUG 43843 / 130Z).